Reading from the N-terminus, the 284-residue chain is 2-dehydro-3-deoxyphosphooctonate aldolase (284 aa).

The protein belongs to the KdsA family.

The protein resides in the cytoplasm. The catalysed reaction is D-arabinose 5-phosphate + phosphoenolpyruvate + H2O = 3-deoxy-alpha-D-manno-2-octulosonate-8-phosphate + phosphate. It participates in carbohydrate biosynthesis; 3-deoxy-D-manno-octulosonate biosynthesis; 3-deoxy-D-manno-octulosonate from D-ribulose 5-phosphate: step 2/3. The protein operates within bacterial outer membrane biogenesis; lipopolysaccharide biosynthesis. The sequence is that of 2-dehydro-3-deoxyphosphooctonate aldolase from Escherichia coli O6:H1 (strain CFT073 / ATCC 700928 / UPEC).